The primary structure comprises 201 residues: Peptidyl-tRNA hydrolase (201 aa).

Tyr17 contributes to the tRNA binding site. Catalysis depends on His22, which acts as the Proton acceptor. TRNA is bound by residues Tyr68, Asn70, and Asn116.

Belongs to the PTH family. Monomer.

It localises to the cytoplasm. The enzyme catalyses an N-acyl-L-alpha-aminoacyl-tRNA + H2O = an N-acyl-L-amino acid + a tRNA + H(+). Hydrolyzes ribosome-free peptidyl-tRNAs (with 1 or more amino acids incorporated), which drop off the ribosome during protein synthesis, or as a result of ribosome stalling. In terms of biological role, catalyzes the release of premature peptidyl moieties from peptidyl-tRNA molecules trapped in stalled 50S ribosomal subunits, and thus maintains levels of free tRNAs and 50S ribosomes. The protein is Peptidyl-tRNA hydrolase of Lawsonia intracellularis (strain PHE/MN1-00).